Here is a 434-residue protein sequence, read N- to C-terminus: UDP-glucose 6-dehydrogenase (434 aa).

NAD(+) is bound by residues 2–19 (NITF…GVMM), Val11, Asp30, Lys35, Thr121, and Glu152. Substrate-binding positions include 148–152 (EFLRE), Lys204, Asn208, 249–253 (FLNAG), and Gly257. Cys260 acts as the Nucleophile in catalysis. Lys263 contributes to the NAD(+) binding site. Residue Lys321 participates in substrate binding. Arg328 is an NAD(+) binding site.

It belongs to the UDP-glucose/GDP-mannose dehydrogenase family.

The catalysed reaction is UDP-alpha-D-glucose + 2 NAD(+) + H2O = UDP-alpha-D-glucuronate + 2 NADH + 3 H(+). The protein operates within nucleotide-sugar biosynthesis; UDP-alpha-D-glucuronate biosynthesis; UDP-alpha-D-glucuronate from UDP-alpha-D-glucose: step 1/1. This is UDP-glucose 6-dehydrogenase (udg) from Rickettsia bellii (strain RML369-C).